A 540-amino-acid polypeptide reads, in one-letter code: Light-independent protochlorophyllide reductase subunit B (540 aa).

D36 is a binding site for [4Fe-4S] cluster. Catalysis depends on D292, which acts as the Proton donor. Position 428–429 (428–429) interacts with substrate; the sequence is GL. Residues 451–490 form a disordered region; that stretch reads SNVASGVEPSTPSVSSEVSASSSASPEASAPTPSPDGDMV. Residues 457–481 are compositionally biased toward low complexity; it reads VEPSTPSVSSEVSASSSASPEASAP.

The protein belongs to the ChlB/BchB/BchZ family. As to quaternary structure, protochlorophyllide reductase is composed of three subunits; BchL, BchN and BchB. Forms a heterotetramer of two BchB and two BchN subunits. Requires [4Fe-4S] cluster as cofactor.

It carries out the reaction chlorophyllide a + oxidized 2[4Fe-4S]-[ferredoxin] + 2 ADP + 2 phosphate = protochlorophyllide a + reduced 2[4Fe-4S]-[ferredoxin] + 2 ATP + 2 H2O. It participates in porphyrin-containing compound metabolism; bacteriochlorophyll biosynthesis (light-independent). Its function is as follows. Component of the dark-operative protochlorophyllide reductase (DPOR) that uses Mg-ATP and reduced ferredoxin to reduce ring D of protochlorophyllide (Pchlide) to form chlorophyllide a (Chlide). This reaction is light-independent. The NB-protein (BchN-BchB) is the catalytic component of the complex. The protein is Light-independent protochlorophyllide reductase subunit B of Chlorobium chlorochromatii (strain CaD3).